Here is a 327-residue protein sequence, read N- to C-terminus: Undecaprenyl-phosphate 4-deoxy-4-formamido-L-arabinose transferase (327 aa).

A run of 2 helical transmembrane segments spans residues 236 to 256 (LSVFGSIIAVLGFTLSVLLVV) and 270 to 290 (VFMLFAVLFMFIGAQFVAMGL).

This sequence belongs to the glycosyltransferase 2 family.

It localises to the cell inner membrane. It catalyses the reaction UDP-4-deoxy-4-formamido-beta-L-arabinose + di-trans,octa-cis-undecaprenyl phosphate = 4-deoxy-4-formamido-alpha-L-arabinopyranosyl di-trans,octa-cis-undecaprenyl phosphate + UDP. Its pathway is glycolipid biosynthesis; 4-amino-4-deoxy-alpha-L-arabinose undecaprenyl phosphate biosynthesis; 4-amino-4-deoxy-alpha-L-arabinose undecaprenyl phosphate from UDP-4-deoxy-4-formamido-beta-L-arabinose and undecaprenyl phosphate: step 1/2. It participates in bacterial outer membrane biogenesis; lipopolysaccharide biosynthesis. Catalyzes the transfer of 4-deoxy-4-formamido-L-arabinose from UDP to undecaprenyl phosphate. The modified arabinose is attached to lipid A and is required for resistance to polymyxin and cationic antimicrobial peptides. This is Undecaprenyl-phosphate 4-deoxy-4-formamido-L-arabinose transferase from Enterobacter sp. (strain 638).